The sequence spans 190 residues: Cytoglobin (190 aa).

Residues 18 to 167 (ELSEAERKAV…IYSHVTAAYK (150 aa)) form the Globin domain. Cysteine 38 and cysteine 83 are disulfide-bonded. Heme b is bound by residues histidine 81 and histidine 113.

Belongs to the globin family. As to quaternary structure, monomeric. Homodimer; disulfide-linked in vitro. Also homooligomeric in vitro. In terms of processing, the formation of an intramolecular disulfide bond between cysteines Cys-38 and Cys-83 specifically enhances the nitrite reductase activity. In terms of tissue distribution, widely expressed. Highest expression in heart, stomach, bladder and small intestine.

It localises to the cytoplasm. It is found in the nucleus. The catalysed reaction is Fe(II)-heme b-[protein] + nitric oxide + O2 = Fe(III)-heme b-[protein] + nitrate. The enzyme catalyses Fe(III)-heme b-[protein] + nitric oxide + H2O = Fe(II)-heme b-[protein] + nitrite + 2 H(+). It catalyses the reaction 2 superoxide + 2 H(+) = H2O2 + O2. It carries out the reaction H2O2 + AH2 = A + 2 H2O. The nitric oxide dioxygenase activity is activated by a reducing system composed of cytochrome b5, its upstream reductase CYB5R3 and NADH. Its function is as follows. Probable multifunctional globin with a hexacoordinated heme iron required for the catalysis of various reactions depending on redox condition of the cell as well as oxygen availability. Has a nitric oxide dioxygenase (NOD) activity and is most probably involved in cell-mediated and oxygen-dependent nitric oxide consumption. By scavenging this second messenger may regulate several biological processes including endothelium-mediated vasodilation and vascular tone. Under normoxic conditions functions as a nitric oxide dioxygenase (NOD) but under hypoxic conditions the globin may switch its function to that of a nitrite (NO2) reductase (NiR), generating nitric oxide. Could also have peroxidase and superoxide dismutase activities, detoxifying reactive oxygen species and protecting cells against oxidative stress. Also binds dioxygen with low affinity and could function as an oxygen sensor but has probably no function as a respiratory oxygen carrier. The chain is Cytoglobin from Homo sapiens (Human).